The following is a 617-amino-acid chain: Na(+)/H(+) antiporter NhaA 1 (617 aa).

The tract at residues 1–26 (MTVTEPATQRGFPLLPSRLSRGSKAT) is disordered. Positions 1–433 (MTVTEPATQR…GWAIFRITDW (433 aa)) are na(+)/H(+) antiporter NhaA. 11 helical membrane passes run 33–53 (AAALLLTFTVVAILWANSPWA), 75–95 (MTVKHVVNDALMTFFFFIVGL), 113–133 (AVPVVAAAAGLILPAVVFLAF), 141–161 (HAWGVVISTDTAFLVGALAII), 171–191 (LFLLTLAVVDDVGALIAIAVL), 198–218 (VAPLVVAVALLGALALVRYLP), 234–254 (IALYLAGIHPTLAGVAVALLI), 304–324 (VSPVVSFVILPLFALVNAGVL), 341–361 (GIVAGLVVGKFVGIAGATWLI), 378–398 (IAGGAALSGIGFTISLFIVDI), and 411–431 (IGVLAASVLAFALGWAIFRIT). The Thioredoxin domain occupies 434–617 (LSPPEPVGLK…LIRALEAGRG (184 aa)).

It in the N-terminal section; belongs to the NhaA Na(+)/H(+) (TC 2.A.33) antiporter family.

It is found in the cell membrane. The enzyme catalyses Na(+)(in) + 2 H(+)(out) = Na(+)(out) + 2 H(+)(in). Functionally, na(+)/H(+) antiporter that extrudes sodium in exchange for external protons. This Mycolicibacterium gilvum (strain PYR-GCK) (Mycobacterium gilvum (strain PYR-GCK)) protein is Na(+)/H(+) antiporter NhaA 1.